A 395-amino-acid chain; its full sequence is Flap endonuclease 1 (395 aa).

The segment at 1–104 (MGIKHLYQII…GELAKRFMRK (104 aa)) is N-domain. Mg(2+) is bound at residue aspartate 34. Positions 47 and 70 each coordinate DNA. Positions 86, 158, 160, 179, and 181 each coordinate Mg(2+). The I-domain stretch occupies residues 122 to 253 (EVEKFSRRTV…NTALKLIRDH (132 aa)). Residue glutamate 158 coordinates DNA. Glycine 231 and aspartate 233 together coordinate DNA. Residue aspartate 233 participates in Mg(2+) binding. An interaction with PCNA region spans residues 341–349 (QQSRLEGFF). The segment covering 360–389 (AVLKRKHEEKLELQKKKKKEDSKAKKEAKS) has biased composition (basic and acidic residues). The disordered stretch occupies residues 360 to 395 (AVLKRKHEEKLELQKKKKKEDSKAKKEAKSKPRGTT).

It belongs to the XPG/RAD2 endonuclease family. FEN1 subfamily. As to quaternary structure, interacts with PCNA. Three molecules of FEN1 bind to one PCNA trimer with each molecule binding to one PCNA monomer. PCNA stimulates the nuclease activity without altering cleavage specificity. Requires Mg(2+) as cofactor. Phosphorylated. Phosphorylation upon DNA damage induces relocalization to the nuclear plasma.

The protein localises to the nucleus. It is found in the nucleolus. The protein resides in the nucleoplasm. Its subcellular location is the mitochondrion. In terms of biological role, structure-specific nuclease with 5'-flap endonuclease and 5'-3' exonuclease activities involved in DNA replication and repair. During DNA replication, cleaves the 5'-overhanging flap structure that is generated by displacement synthesis when DNA polymerase encounters the 5'-end of a downstream Okazaki fragment. It enters the flap from the 5'-end and then tracks to cleave the flap base, leaving a nick for ligation. Also involved in the long patch base excision repair (LP-BER) pathway, by cleaving within the apurinic/apyrimidinic (AP) site-terminated flap. Acts as a genome stabilization factor that prevents flaps from equilibrating into structures that lead to duplications and deletions. Also possesses 5'-3' exonuclease activity on nicked or gapped double-stranded DNA, and exhibits RNase H activity. Also involved in replication and repair of rDNA and in repairing mitochondrial DNA. This Ajellomyces capsulatus (strain H143) (Darling's disease fungus) protein is Flap endonuclease 1.